The primary structure comprises 130 residues: Holo-[acyl-carrier-protein] synthase (130 aa).

Residues Asp-9 and Glu-58 each contribute to the Mg(2+) site.

Belongs to the P-Pant transferase superfamily. AcpS family. Mg(2+) serves as cofactor.

It is found in the cytoplasm. It carries out the reaction apo-[ACP] + CoA = holo-[ACP] + adenosine 3',5'-bisphosphate + H(+). Its function is as follows. Transfers the 4'-phosphopantetheine moiety from coenzyme A to a Ser of acyl-carrier-protein. This chain is Holo-[acyl-carrier-protein] synthase, found in Mycobacterium marinum (strain ATCC BAA-535 / M).